Reading from the N-terminus, the 687-residue chain is Probable WRKY transcription factor 2 (687 aa).

The disordered stretch occupies residues 197–276 (YGNYNNRSSS…AGGAPAEDGY (80 aa)). 2 stretches are compositionally biased toward polar residues: residues 199-208 (NYNNRSSSHQ) and 219-249 (NIES…TSLE). The WRKY 1 DNA-binding region spans 267-331 (AGGAPAEDGY…YKGAHNHLKP (65 aa)). Zn(2+)-binding residues include Cys298, Cys303, His326, and His328. Disordered stretches follow at residues 324–384 (GAHN…STRF) and 416–453 (FSND…ESKR). Residues 354–379 (RDSAATWVSCNNTQQQGGSNENNVEE) show a composition bias toward polar residues. Residues 435–444 (YDGGGGGGGG) are compositionally biased toward gly residues. A DNA-binding region (WRKY 2) is located at residues 481-546 (SDVDILDDGY…YEGKHNHDVP (66 aa)). Positions 512, 517, 541, and 543 each coordinate Zn(2+). Residues 537-599 (YEGKHNHDVP…QVTTNNQSPF (63 aa)) are disordered. Residues 553–565 (HGGGGDSGNGNSG) show a composition bias toward gly residues. Positions 578 to 589 (HHSEPPRGRFDR) are enriched in basic and acidic residues. The segment covering 590-599 (QVTTNNQSPF) has biased composition (polar residues).

Belongs to the WRKY group I family. In terms of tissue distribution, low expression in senescent leaves. Expressed in both the unfertilized egg cell and the pollen tube.

The protein localises to the nucleus. Functionally, transcription factor. Regulates WOX8 and WOX9 expression and basal cell division patterns during early embryogenesis. Interacts specifically with the W box (5'-(T)TGAC[CT]-3'), a frequently occurring elicitor-responsive cis-acting element. Required to repolarize the zygote from a transient symmetric state. The polypeptide is Probable WRKY transcription factor 2 (Arabidopsis thaliana (Mouse-ear cress)).